The chain runs to 299 residues: Farnesyl diphosphate synthase (299 aa).

Isopentenyl diphosphate-binding residues include Lys45, Arg48, and His77. Residues Asp84 and Asp90 each coordinate Mg(2+). (2E)-geranyl diphosphate is bound at residue Arg95. Position 96 (Arg96) interacts with isopentenyl diphosphate. 4 residues coordinate (2E)-geranyl diphosphate: Lys181, Thr182, Gln220, and Lys237.

The protein belongs to the FPP/GGPP synthase family. Mg(2+) is required as a cofactor.

Its subcellular location is the cytoplasm. The catalysed reaction is isopentenyl diphosphate + (2E)-geranyl diphosphate = (2E,6E)-farnesyl diphosphate + diphosphate. This Escherichia coli (strain K12) protein is Farnesyl diphosphate synthase (ispA).